The chain runs to 124 residues: Glycine cleavage system H protein (124 aa).

In terms of domain architecture, Lipoyl-binding spans 24–106; sequence TYTMGITDHA…YDDGWLVKFK (83 aa). N6-lipoyllysine is present on Lys65.

Belongs to the GcvH family. In terms of assembly, the glycine cleavage system is composed of four proteins: P, T, L and H. (R)-lipoate is required as a cofactor.

The glycine cleavage system catalyzes the degradation of glycine. The H protein shuttles the methylamine group of glycine from the P protein to the T protein. This Ruthia magnifica subsp. Calyptogena magnifica protein is Glycine cleavage system H protein.